Here is a 398-residue protein sequence, read N- to C-terminus: Cysteine desulfurase 2 (398 aa).

Residues 71 to 72, Asn-150, Gln-178, and 198 to 200 each bind pyridoxal 5'-phosphate; these read GT and SGH. Lys-201 is modified (N6-(pyridoxal phosphate)lysine). Residue Thr-236 participates in pyridoxal 5'-phosphate binding. Catalysis depends on Cys-323, which acts as the Cysteine persulfide intermediate. Residue Cys-323 participates in [2Fe-2S] cluster binding.

Belongs to the class-V pyridoxal-phosphate-dependent aminotransferase family. NifS/IscS subfamily. As to quaternary structure, homodimer. It depends on pyridoxal 5'-phosphate as a cofactor.

The catalysed reaction is (sulfur carrier)-H + L-cysteine = (sulfur carrier)-SH + L-alanine. Its function is as follows. Catalyzes the removal of elemental sulfur atoms from cysteine to produce alanine. Seems to participate in the biosynthesis of the nitrogenase metalloclusters by providing the inorganic sulfur required for the Fe-S core formation. This Trichormus variabilis (strain ATCC 29413 / PCC 7937) (Anabaena variabilis) protein is Cysteine desulfurase 2.